We begin with the raw amino-acid sequence, 459 residues long: Ribulose bisphosphate carboxylase large chain (459 aa).

Position 4 is an N6,N6,N6-trimethyllysine (K4). The substrate site is built by N113 and T163. K165 serves as the catalytic Proton acceptor. A substrate-binding site is contributed by K167. Positions 191, 193, and 194 each coordinate Mg(2+). Residue K191 is modified to N6-carboxylysine. The Proton acceptor role is filled by H284. Positions 285, 317, and 369 each coordinate substrate.

It belongs to the RuBisCO large chain family. Type I subfamily. Heterohexadecamer of 8 large chains and 8 small chains; disulfide-linked. The disulfide link is formed within the large subunit homodimers. Mg(2+) serves as cofactor. In terms of processing, the disulfide bond which can form in the large chain dimeric partners within the hexadecamer appears to be associated with oxidative stress and protein turnover.

It localises to the plastid. The protein resides in the chloroplast. The enzyme catalyses 2 (2R)-3-phosphoglycerate + 2 H(+) = D-ribulose 1,5-bisphosphate + CO2 + H2O. It catalyses the reaction D-ribulose 1,5-bisphosphate + O2 = 2-phosphoglycolate + (2R)-3-phosphoglycerate + 2 H(+). Functionally, ruBisCO catalyzes two reactions: the carboxylation of D-ribulose 1,5-bisphosphate, the primary event in carbon dioxide fixation, as well as the oxidative fragmentation of the pentose substrate in the photorespiration process. Both reactions occur simultaneously and in competition at the same active site. The sequence is that of Ribulose bisphosphate carboxylase large chain from Nyssa ogeche (Ogeechee tupelo).